A 1124-amino-acid polypeptide reads, in one-letter code: Sodium/hydrogen exchanger 11 (1124 aa).

The next 11 helical transmembrane spans lie at 25 to 45 (LVEEKHFTTLVCFIVVLGGLL), 52 to 72 (CEVIVLTILSLSGFVIGHMAY), 90 to 110 (FSLYSYFSPLIIFMVALDVEF), 120 to 140 (VLLTGLISFSTASIIIGYVVI), 179 to 199 (IYIDLIRGESLIICSIASIFF), 224 to 244 (DILGSIIFGYWCAKIIQCILA), 254 to 274 (IILCFSMVYMTFYIVEFLGMS), 305 to 325 (IFSSVYEHLIYAFFGIVIGCG), 335 to 355 (IPFIFILFTTVNLVRLLTILL), 372 to 392 (GVVITWSGIKGVFNLLWAPDV), and 405 to 425 (MFILYVQVISLLTMGINSYVM). N-linked (GlcNAc...) asparagine glycans are attached at residues Asn-447 and Asn-473. A run of 4 helical transmembrane segments spans residues 612 to 632 (TGQIINLIYIYPMIIHLWPMA), 641 to 661 (ISINYYFMFLYVLESTLKIII), 674 to 694 (LEFFILVIGIIDIFCVYFVKL), and 706 to 726 (VIMGYLRIIRFLPLFKIIVPI). An ion transport-like region spans residues 642–723 (SINYYFMFLY…IRFLPLFKII (82 aa)). 867-999 (IWLEGKDVLI…EYKIWLKLAL (133 aa)) contributes to the a nucleoside 3',5'-cyclic phosphate binding site.

It belongs to the monovalent cation:proton antiporter 1 (CPA1) transporter (TC 2.A.36) family.

The protein localises to the membrane. In terms of biological role, involved in pH regulation. The protein is Sodium/hydrogen exchanger 11 (SLC9C2) of Homo sapiens (Human).